Here is a 400-residue protein sequence, read N- to C-terminus: Formate-dependent phosphoribosylglycinamide formyltransferase (400 aa).

N(1)-(5-phospho-beta-D-ribosyl)glycinamide-binding positions include 22–23 and glutamate 82; that span reads EL. Residues arginine 115, lysine 156, 161 to 166, 196 to 199, and glutamate 204 contribute to the ATP site; these read SSGKGQ and EGFI. An ATP-grasp domain is found at 120–309; it reads RLAAETLGLP…EFALHARAIL (190 aa). Mg(2+)-binding residues include glutamate 268 and glutamate 280. N(1)-(5-phospho-beta-D-ribosyl)glycinamide contacts are provided by residues aspartate 287, lysine 361, and 368 to 369; that span reads RR.

The protein belongs to the PurK/PurT family. In terms of assembly, homodimer.

The enzyme catalyses N(1)-(5-phospho-beta-D-ribosyl)glycinamide + formate + ATP = N(2)-formyl-N(1)-(5-phospho-beta-D-ribosyl)glycinamide + ADP + phosphate + H(+). It functions in the pathway purine metabolism; IMP biosynthesis via de novo pathway; N(2)-formyl-N(1)-(5-phospho-D-ribosyl)glycinamide from N(1)-(5-phospho-D-ribosyl)glycinamide (formate route): step 1/1. In terms of biological role, involved in the de novo purine biosynthesis. Catalyzes the transfer of formate to 5-phospho-ribosyl-glycinamide (GAR), producing 5-phospho-ribosyl-N-formylglycinamide (FGAR). Formate is provided by PurU via hydrolysis of 10-formyl-tetrahydrofolate. This Xanthomonas axonopodis pv. citri (strain 306) protein is Formate-dependent phosphoribosylglycinamide formyltransferase.